The sequence spans 69 residues: Conotoxin Lt5.10 (69 aa).

Positions 1–19 are cleaved as a signal peptide; the sequence is MLCLPVFIILLLLASPAAP. Residues 20–54 constitute a propeptide that is removed on maturation; it reads KSLETRIQNDLIRAGLTDADLKTEKGFLSGLLNVA.

Belongs to the conotoxin T superfamily. Contains 2 disulfide bonds that can be either 'C1-C3, C2-C4' or 'C1-C4, C2-C3', since these disulfide connectivities have been observed for conotoxins with cysteine framework V (for examples, see AC P0DQQ7 and AC P81755). In terms of tissue distribution, expressed by the venom duct.

The protein localises to the secreted. The sequence is that of Conotoxin Lt5.10 from Conus litteratus (Lettered cone).